Reading from the N-terminus, the 326-residue chain is Pyruvate dehydrogenase E1 component subunit alpha (326 aa).

Heterodimer of an alpha and a beta chain. Thiamine diphosphate is required as a cofactor.

The catalysed reaction is N(6)-[(R)-lipoyl]-L-lysyl-[protein] + pyruvate + H(+) = N(6)-[(R)-S(8)-acetyldihydrolipoyl]-L-lysyl-[protein] + CO2. In terms of biological role, the pyruvate dehydrogenase complex catalyzes the overall conversion of pyruvate to acetyl-CoA and CO(2). It contains multiple copies of three enzymatic components: pyruvate dehydrogenase (E1), dihydrolipoamide acetyltransferase (E2) and lipoamide dehydrogenase (E3). This is Pyruvate dehydrogenase E1 component subunit alpha (pdhA) from Rickettsia bellii (strain RML369-C).